A 481-amino-acid chain; its full sequence is Iron permease EfeU (481 aa).

An N-terminal signal peptide occupies residues 1-22 (MARGLALILFSLLMVFGSAAHA). The next 6 helical transmembrane spans lie at 258 to 278 (GGAS…TVLF), 288 to 308 (FLLG…VGVW), 338 to 358 (FALI…IFFI), 368 to 388 (ELIG…VLMI), 399 to 419 (FFLL…GTGV), and 446 to 466 (PSVY…IALV).

The protein belongs to the oxidase-dependent Fe transporter (OFeT) (TC 9.A.10.1) family. As to quaternary structure, component of the iron transporter efeUOB/M complex composed of EfeU, EfeM and EfeB; EfeU is essential for the complex formation.

It is found in the cell membrane. In terms of biological role, part of the iron transporter system efeUOB/M involved in iron import. Mediates the uptake of Fe(3+) ions, delivered by EfeM, across the cell membrane. This chain is Iron permease EfeU (efeU), found in Bacillus subtilis (strain 168).